Reading from the N-terminus, the 301-residue chain is Acetylglutamate kinase (301 aa).

Substrate contacts are provided by residues 64 to 65 (GG), Arg86, and Asn181.

The protein belongs to the acetylglutamate kinase family. ArgB subfamily.

The protein resides in the cytoplasm. The enzyme catalyses N-acetyl-L-glutamate + ATP = N-acetyl-L-glutamyl 5-phosphate + ADP. The protein operates within amino-acid biosynthesis; L-arginine biosynthesis; N(2)-acetyl-L-ornithine from L-glutamate: step 2/4. In terms of biological role, catalyzes the ATP-dependent phosphorylation of N-acetyl-L-glutamate. This Aliarcobacter butzleri (strain RM4018) (Arcobacter butzleri) protein is Acetylglutamate kinase.